A 291-amino-acid polypeptide reads, in one-letter code: Beta-lactamase CTX-M-6 (291 aa).

A signal peptide spans 1–28 (MMTQSIRRSMLTVMATLPLLFSSATLHA). Ser-73 acts as the Acyl-ester intermediate in catalysis. Residue 237-239 (KTG) coordinates substrate.

This sequence belongs to the class-A beta-lactamase family.

It carries out the reaction a beta-lactam + H2O = a substituted beta-amino acid. In terms of biological role, has cefotaxime-hydrolyzing activity. In Salmonella typhimurium, this protein is Beta-lactamase CTX-M-6 (bla).